Reading from the N-terminus, the 368-residue chain is tRNA 2-selenouridine synthase (368 aa).

One can recognise a Rhodanese domain in the interval 12-136 (FLGDAPLLDT…MRGFLLETIE (125 aa)). The S-selanylcysteine intermediate role is filled by C95.

The protein belongs to the SelU family. Monomer.

The catalysed reaction is 5-methylaminomethyl-2-thiouridine(34) in tRNA + selenophosphate + (2E)-geranyl diphosphate + H2O + H(+) = 5-methylaminomethyl-2-selenouridine(34) in tRNA + (2E)-thiogeraniol + phosphate + diphosphate. The enzyme catalyses 5-methylaminomethyl-2-thiouridine(34) in tRNA + (2E)-geranyl diphosphate = 5-methylaminomethyl-S-(2E)-geranyl-thiouridine(34) in tRNA + diphosphate. It catalyses the reaction 5-methylaminomethyl-S-(2E)-geranyl-thiouridine(34) in tRNA + selenophosphate + H(+) = 5-methylaminomethyl-2-(Se-phospho)selenouridine(34) in tRNA + (2E)-thiogeraniol. It carries out the reaction 5-methylaminomethyl-2-(Se-phospho)selenouridine(34) in tRNA + H2O = 5-methylaminomethyl-2-selenouridine(34) in tRNA + phosphate. Functionally, involved in the post-transcriptional modification of the uridine at the wobble position (U34) of tRNA(Lys), tRNA(Glu) and tRNA(Gln). Catalyzes the conversion of 2-thiouridine (S2U-RNA) to 2-selenouridine (Se2U-RNA). Acts in a two-step process involving geranylation of 2-thiouridine (S2U) to S-geranyl-2-thiouridine (geS2U) and subsequent selenation of the latter derivative to 2-selenouridine (Se2U) in the tRNA chain. The sequence is that of tRNA 2-selenouridine synthase from Bordetella bronchiseptica (strain ATCC BAA-588 / NCTC 13252 / RB50) (Alcaligenes bronchisepticus).